A 1066-amino-acid chain; its full sequence is FHIP family protein GI14169 (1066 aa).

Residues 1 to 11 show a composition bias toward polar residues; it reads MSWLRTSPLRQ. Residues 1–35 are disordered; it reads MSWLRTSPLRQSLTRSGSSSGNGSSGTATTMRQRP. Residues 12–30 are compositionally biased toward low complexity; the sequence is SLTRSGSSSGNGSSGTATT. S500 is subject to Phosphoserine. A disordered region spans residues 651-682; it reads GIDVTTTTTASASDTDLEHNNNSSSISSGRRD. Residues 655 to 678 are compositionally biased toward low complexity; sequence TTTTTASASDTDLEHNNNSSSISS. S820 bears the Phosphoserine mark. Disordered regions lie at residues 821 to 913 and 935 to 1007; these read PLHQ…GNSA and SGGE…TGNF. Residues 822–855 show a composition bias toward low complexity; it reads LHQQLQHQQQHQQLAQTNSHTQQQQQQQQQQAQQ. The span at 856–874 shows a compositional bias: polar residues; it reads RSTYATLSAATPVQASPTS. The segment covering 890 to 913 has biased composition (low complexity); sequence SRSITSMFSRRSTSSTPASNGNSA. A compositionally biased stretch (polar residues) spans 947-971; the sequence is QDSTRGNTCETSLSTAPRQEPQTNV. Residues 972 to 997 are compositionally biased toward low complexity; the sequence is GSSSNSSIGSSTQTLSGTHSSSTLHG.

The protein belongs to the FHIP family.

The chain is FHIP family protein GI14169 from Drosophila mojavensis (Fruit fly).